The sequence spans 393 residues: uncharacterized protein (393 aa).

The region spanning A12–E70 is the TRAM domain. The [4Fe-4S] cluster site is built by C83, C89, C92, and C166. The S-adenosyl-L-methionine site is built by Q221, Y250, E273, and D316. C343 functions as the Nucleophile in the catalytic mechanism.

This sequence belongs to the class I-like SAM-binding methyltransferase superfamily. RNA M5U methyltransferase family.

This is an uncharacterized protein from Bdellovibrio bacteriovorus (strain ATCC 15356 / DSM 50701 / NCIMB 9529 / HD100).